The following is a 1161-amino-acid chain: Cingulin (1161 aa).

Residues 1–403 are head; the sequence is MSSLSADRKP…SLIHERFCGV (403 aa). Disordered stretches follow at residues 29–53, 79–309, 649–678, 699–721, 739–773, and 1123–1161; these read GGFPDKSRLANGVGGVSNGTSSPSK, SYGV…LGRD, QSELEKQKAETLKKQEELKSATRASEKRET, SKAIEKTQQPLVSDQTKDPESNL, RLHSSVPDSSSSDALEEENRSLKTQLEESRRAASR, and QSRRSTLGSTLSSDEEDNYSDTKSITSILTDSPLQTTSC. The ZIM signature appears at 51–65; it reads PSKYGVAVRVQGISG. 2 stretches are compositionally biased toward polar residues: residues 84–104 and 117–129; these read LKTQPQIQSAPPVVSQTSPYN and PQGSYNPTDQPSS. The span at 189 to 203 shows a compositional bias: low complexity; it reads NGIGSSLNGTGLNGS. Positions 273-305 are enriched in polar residues; that stretch reads EASSTSPTINPYAPNTSATVPKLNSTKPSSTGS. Residues 413-1128 adopt a coiled-coil conformation; it reads SNMKTELEQA…RKIQQSRRST (716 aa). Residues 742-751 are compositionally biased toward low complexity; that stretch reads SSVPDSSSSD. A compositionally biased stretch (basic and acidic residues) spans 755-773; that stretch reads EENRSLKTQLEESRRAASR. The tail stretch occupies residues 1122-1161; sequence QQSRRSTLGSTLSSDEEDNYSDTKSITSILTDSPLQTTSC. A compositionally biased stretch (low complexity) spans 1124-1134; that stretch reads SRRSTLGSTLS. The span at 1143–1161 shows a compositional bias: polar residues; sequence DTKSITSILTDSPLQTTSC.

It belongs to the cingulin family. In terms of assembly, homodimer.

Its subcellular location is the cell junction. It localises to the tight junction. In terms of biological role, probably plays a role in the formation and regulation of the tight junction (TJ) paracellular permeability barrier. Note=Localizes to the apical junction complex composed of tight and adherens junctions. The polypeptide is Cingulin (Danio rerio (Zebrafish)).